We begin with the raw amino-acid sequence, 247 residues long: UDP-N-acetyl-D-mannosaminuronic acid transferase (247 aa).

It belongs to the glycosyltransferase 26 family.

It catalyses the reaction UDP-N-acetyl-alpha-D-mannosaminouronate + N-acetyl-alpha-D-glucosaminyl-di-trans,octa-cis-undecaprenyl diphosphate = beta-D-ManNAcA-(1-&gt;4)-alpha-D-GlcNAc-di-trans,octa-cis-undecaprenyl diphosphate + UDP + H(+). The protein operates within bacterial outer membrane biogenesis; enterobacterial common antigen biosynthesis. Its function is as follows. Catalyzes the synthesis of Und-PP-GlcNAc-ManNAcA (Lipid II), the second lipid-linked intermediate involved in enterobacterial common antigen (ECA) synthesis. The protein is UDP-N-acetyl-D-mannosaminuronic acid transferase of Enterobacter sp. (strain 638).